Here is a 468-residue protein sequence, read N- to C-terminus: MSLSGMAIRRLITKGVIPVCQVAPLSTSAEGSTNLKEVLSKKIPAHNAKVKSFRTEHGSTVVQNVNIDMIYGGMRSMKGMVTETSVLDPEEGIRFRGYSIPECQKLLPKAKGGEEPLPEAIWWLLCTGDVPSEAQTAAITKEWNARADLPTHVVRMLDNFPDNLHPMAQFIAAIAALNNESKFAGAYARGVAKASYWEYAYEDSMDLLAKLPTVAAIIYRNLYRDGSAVSVIDPKKDWSANFSSMLGYDDPLFAELMRLYLVIHSDHEGGNVSAHTSHLVGSALSDPYLSFSAAMAGLAGPLHGLANQEVLVFLNKIVGEIGFNYTEEQLKEWVWKHLKSGQVVPGYGHAVLRKTDPRYECQREFALKHLPNDDLFKLVSTLYKITPGILLEQGKAKNPWPNVDSHSGVLLQYFGMTEMSFYTVLFGVSRALGCLSQLIWARGMGLPLERPKSHSTDGLIKLALAAKK.

Active-site residues include H303, H349, and D404.

Belongs to the citrate synthase family. As to quaternary structure, homodimer.

The protein localises to the mitochondrion matrix. The enzyme catalyses oxaloacetate + acetyl-CoA + H2O = citrate + CoA + H(+). It functions in the pathway carbohydrate metabolism; tricarboxylic acid cycle; isocitrate from oxaloacetate: step 1/2. This Caenorhabditis elegans protein is Probable citrate synthase, mitochondrial (cts-1).